The following is a 145-amino-acid chain: AP-2 complex subunit sigma (145 aa).

The protein belongs to the adaptor complexes small subunit family. As to quaternary structure, adaptor protein complex 2 (AP-2) is a heterotetramer composed of two large adaptins (alpha-type subunit apl3 and beta-type subunit apl1), a medium chain (mu-type subunit apm4) and a small adaptin (sigma-type subunit aps2).

It localises to the cell membrane. It is found in the membrane. The protein localises to the coated pit. Its function is as follows. Component of the adaptor complexes which link clathrin to receptors in coated vesicles. Clathrin-associated protein complexes are believed to interact with the cytoplasmic tails of membrane proteins, leading to their selection and concentration. The protein is AP-2 complex subunit sigma (aps2) of Emericella nidulans (strain FGSC A4 / ATCC 38163 / CBS 112.46 / NRRL 194 / M139) (Aspergillus nidulans).